The following is an 85-amino-acid chain: DNA-directed RNA polymerase subunit omega (85 aa).

Belongs to the RNA polymerase subunit omega family. The RNAP catalytic core consists of 2 alpha, 1 beta, 1 beta' and 1 omega subunit. When a sigma factor is associated with the core the holoenzyme is formed, which can initiate transcription.

The catalysed reaction is RNA(n) + a ribonucleoside 5'-triphosphate = RNA(n+1) + diphosphate. Promotes RNA polymerase assembly. Latches the N- and C-terminal regions of the beta' subunit thereby facilitating its interaction with the beta and alpha subunits. The sequence is that of DNA-directed RNA polymerase subunit omega from Latilactobacillus sakei subsp. sakei (strain 23K) (Lactobacillus sakei subsp. sakei).